The chain runs to 121 residues: Large ribosomal subunit protein bL20 (121 aa).

This sequence belongs to the bacterial ribosomal protein bL20 family.

Its function is as follows. Binds directly to 23S ribosomal RNA and is necessary for the in vitro assembly process of the 50S ribosomal subunit. It is not involved in the protein synthesizing functions of that subunit. The polypeptide is Large ribosomal subunit protein bL20 (Orientia tsutsugamushi (strain Ikeda) (Rickettsia tsutsugamushi)).